Here is a 1332-residue protein sequence, read N- to C-terminus: Elongator complex protein 1 (1332 aa).

Ser471, Ser804, Ser867, Ser1171, and Ser1174 each carry phosphoserine. The mediates dimerization stretch occupies residues 885 to 1332; that stretch reads VDVNELYDHS…RTQWKLSLLD (448 aa). A disordered region spans residues 1150–1208; it reads QAGLDDEVPHGQESDLFSETSSVVSGSEMSGKYSHSNSRISARSSKNRRKAERKKHSLK. The segment covering 1164 to 1177 has biased composition (polar residues); it reads DLFSETSSVVSGSE. Positions 1191–1209 are required for binding to tRNA; sequence ARSSKNRRKAERKKHSLKE. Positions 1194 to 1206 are enriched in basic residues; it reads SKNRRKAERKKHS.

This sequence belongs to the ELP1/IKA1 family. As to quaternary structure, homodimer; dimerization promotes ELP1 stability and elongator complex formation. Component of the elongator complex which consists of ELP1, ELP2, ELP3, ELP4, ELP5 and ELP6. Interacts preferentially with MAP3K14/NIK followed by IKK-alpha and IKK-beta.

The protein localises to the cytoplasm. The protein resides in the nucleus. It functions in the pathway tRNA modification; 5-methoxycarbonylmethyl-2-thiouridine-tRNA biosynthesis. Its function is as follows. Component of the elongator complex which is required for multiple tRNA modifications, including mcm5U (5-methoxycarbonylmethyl uridine), mcm5s2U (5-methoxycarbonylmethyl-2-thiouridine), and ncm5U (5-carbamoylmethyl uridine). The elongator complex catalyzes the formation of carboxymethyluridine in the wobble base at position 34 in tRNAs. Regulates the migration and branching of projection neurons in the developing cerebral cortex, through a process depending on alpha-tubulin acetylation. ELP1 binds to tRNA, mediating interaction of the elongator complex with tRNA. May act as a scaffold protein that assembles active IKK-MAP3K14 complexes (IKKA, IKKB and MAP3K14/NIK). The chain is Elongator complex protein 1 from Homo sapiens (Human).